The following is an 874-amino-acid chain: Coatomer subunit gamma-1 (874 aa).

Over residues methionine 1 to glutamate 11 the composition is skewed to basic and acidic residues. The interval methionine 1 to histidine 21 is disordered. HEAT repeat units lie at residues threonine 64–aspartate 101, lysine 283–serine 320, valine 322–serine 355, and serine 356–arginine 392. Threonine 594 carries the post-translational modification Phosphothreonine. The segment at arginine 609–glycine 874 is interaction with ZNF289/ARFGAP2.

Belongs to the COPG family. Oligomeric complex that consists of at least the alpha, beta, beta', gamma, delta, epsilon and zeta subunits. Interacts with ZNF289/ARFGAP2 through its C-terminal appendage domain. Interacts with EGFR upon EGF treatment; interaction is essential for regulation of EGF-dependent nuclear transport of EGFR by retrograde trafficking from the Golgi to the ER. The coatomer interacts with KDEL receptors; the interaction is important for retrograde trafficking of KDEL-bearing proteins from the Golgi to the endoplasmic reticulum. Interacts with COPB1. Interacts with TMED10 (via C-terminus). Interacts with TMED2, TMED3, TMED7 and TMED9.

Its subcellular location is the cytoplasm. It is found in the cytosol. The protein localises to the golgi apparatus membrane. It localises to the cytoplasmic vesicle. The protein resides in the COPI-coated vesicle membrane. In terms of biological role, the coatomer is a cytosolic protein complex that binds to dilysine motifs and reversibly associates with Golgi non-clathrin-coated vesicles, which further mediate biosynthetic protein transport from the ER, via the Golgi up to the trans Golgi network. Coatomer complex is required for budding from Golgi membranes, and is essential for the retrograde Golgi-to-ER transport of dilysine-tagged proteins. In mammals, the coatomer can only be recruited by membranes associated to ADP-ribosylation factors (ARFs), which are small GTP-binding proteins; the complex also influences the Golgi structural integrity, as well as the processing, activity, and endocytic recycling of LDL receptors. Required for limiting lipid storage in lipid droplets. Involved in lipid homeostasis by regulating the presence of perilipin family members PLIN2 and PLIN3 at the lipid droplet surface and promoting the association of adipocyte triglyceride lipase (PNPLA2) with the lipid droplet surface to mediate lipolysis. In Rattus norvegicus (Rat), this protein is Coatomer subunit gamma-1 (Copg1).